The following is a 90-amino-acid chain: uncharacterized protein (90 aa).

The disordered stretch occupies residues 13-34; sequence APEGMGPHHAASSSHHSAQHHH. A helical membrane pass occupies residues 52 to 72; the sequence is YKMWFLYALILALIFGVFMWW.

Its subcellular location is the host membrane. This is an uncharacterized protein from Invertebrate iridescent virus 3 (IIV-3).